The chain runs to 145 residues: Histone H2B.7 (145 aa).

A compositionally biased stretch (basic and acidic residues) spans 1-30 (MAPKAEKKPAEKKPVEEKSKAEKAPAEKKP). A disordered region spans residues 1–53 (MAPKAEKKPAEKKPVEEKSKAEKAPAEKKPKAGKKLPKEAGAGGDKKKKMKKK). N,N,N-trimethylalanine; alternate is present on alanine 2. Alanine 2 is modified (n,N-dimethylalanine; alternate). Position 2 is an N-methylalanine; alternate (alanine 2). Lysine 4 carries the N6-methyllysine; partial modification. Residues lysine 7 and lysine 12 each carry the N6-acetyllysine modification. Position 13 is an N6,N6-dimethyllysine (lysine 13). N6-acetyllysine occurs at positions 23, 28, and 34. Lysine 35 is subject to N6-acetyllysine; partial. A Glycyl lysine isopeptide (Lys-Gly) (interchain with G-Cter in ubiquitin) cross-link involves residue lysine 141.

This sequence belongs to the histone H2B family. As to quaternary structure, the nucleosome is a histone octamer containing two molecules each of H2A, H2B, H3 and H4 assembled in one H3-H4 heterotetramer and two H2A-H2B heterodimers. The octamer wraps approximately 147 bp of DNA. Post-translationally, can be acetylated to form H2BK6ac, H2BK11ac, H2BK22ac, H2BK27ac H2BK33ac and H2BK34ac. In terms of processing, mono-, di- or trimethylated at the N-terminus to form H2BA1me1/2/3. H2BA1me2 and H2BA1me3 may be methylated and/or acetylated to form H2BA1me2K3me1, H2BA1me2K3me1K6ac, H2BA1me2K6ac H2BA1me3K6ac, H2BA1me3K6acK11ac and H2BA1me2K3me1K6acK11ac. Monoubiquitinated by BRE1 to form H2BK143ub1 and deubiquitinated by UBP26. Required for heterochromatic histone H3 di- and trimethylation at H3K4me. May give a specific tag for epigenetic transcriptional activation.

It is found in the nucleus. The protein resides in the chromosome. Functionally, core component of nucleosome. Nucleosomes wrap and compact DNA into chromatin, limiting DNA accessibility to the cellular machineries which require DNA as a template. Histones thereby play a central role in transcription regulation, DNA repair, DNA replication and chromosomal stability. DNA accessibility is regulated via a complex set of post-translational modifications of histones, also called histone code, and nucleosome remodeling. The chain is Histone H2B.7 from Arabidopsis thaliana (Mouse-ear cress).